We begin with the raw amino-acid sequence, 615 residues long: Protein translocase subunit SecD (615 aa).

6 helical membrane-spanning segments follow: residues Tyr10 to Gly30, Gln452 to Tyr472, Leu477 to Leu497, Met504 to Ile524, Gly548 to Val570, and Gly585 to Tyr605.

The protein belongs to the SecD/SecF family. SecD subfamily. In terms of assembly, forms a complex with SecF. Part of the essential Sec protein translocation apparatus which comprises SecA, SecYEG and auxiliary proteins SecDF-YajC and YidC.

It is found in the cell inner membrane. In terms of biological role, part of the Sec protein translocase complex. Interacts with the SecYEG preprotein conducting channel. SecDF uses the proton motive force (PMF) to complete protein translocation after the ATP-dependent function of SecA. This Shigella flexneri protein is Protein translocase subunit SecD.